The sequence spans 1222 residues: ATP-dependent helicase/nuclease subunit A (1222 aa).

One can recognise a UvrD-like helicase ATP-binding domain in the interval 39–495; that stretch reads QKRTAQQIEA…ILLKENFRSQ (457 aa). 60-67 contributes to the ATP binding site; the sequence is ASAGSGKT. One can recognise a UvrD-like helicase C-terminal domain in the interval 524-810; the sequence is QLIAGSHAQT…NLMTIHKSKG (287 aa).

The protein belongs to the helicase family. AddA subfamily. In terms of assembly, heterodimer of AddA and AddB/RexB. Requires Mg(2+) as cofactor.

It carries out the reaction Couples ATP hydrolysis with the unwinding of duplex DNA by translocating in the 3'-5' direction.. The enzyme catalyses ATP + H2O = ADP + phosphate + H(+). The heterodimer acts as both an ATP-dependent DNA helicase and an ATP-dependent, dual-direction single-stranded exonuclease. Recognizes the chi site generating a DNA molecule suitable for the initiation of homologous recombination. The AddA nuclease domain is required for chi fragment generation; this subunit has the helicase and 3' -&gt; 5' nuclease activities. This Streptococcus pyogenes serotype M12 (strain MGAS9429) protein is ATP-dependent helicase/nuclease subunit A.